The primary structure comprises 598 residues: Chaperone protein DnaK (598 aa).

A Phosphothreonine; by autocatalysis modification is found at Thr-175. The segment covering 571-591 (AKSAAASSNKDDSLNNNSSSN) has biased composition (low complexity). The interval 571–598 (AKSAAASSNKDDSLNNNSSSNNDEETFE) is disordered.

The protein belongs to the heat shock protein 70 family.

Its function is as follows. Acts as a chaperone. This Mycoplasmopsis agalactiae (strain NCTC 10123 / CIP 59.7 / PG2) (Mycoplasma agalactiae) protein is Chaperone protein DnaK.